A 407-amino-acid chain; its full sequence is MSHRKFSAPRHGHLGFLPHKRSHRHRGKVKTWPRDDPSQPVHLTAFLGYKAGMTHTLREVHRPGLKISKREEVEAVTIVETPPLVVVGVVGYVATPRGLRSFKTIFAEHLSDECRRRFYKDWHKSKKKAFTKACKRWRDTDGKKQLQKDFAAMKKYCKVIRVIVHTQMKLLPFRQKKAHIMEIQLNGGTVAEKVAWAQARLEKQVPVHSVFSQSEVIDVIAVTKGRGVKGVTSRWHTKKLPRKTHKGLRKVACIGAWHPARVGCSIARAGQKGYHHRTELNKKIFRIGRGPHMEDGKLVKNNASTSYDVTAKSITPLGGFPHYGEVNNDFVMLKGCIAGTKKRVITLRKSLLVHHSRQAVENIELKFIDTTSKFGHGRFQTAQEKRAFMGPQKKHLEKETPETSGDL.

Over residues 1–31 (MSHRKFSAPRHGHLGFLPHKRSHRHRGKVKT) the composition is skewed to basic residues. Disordered regions lie at residues 1-35 (MSHR…WPRD) and 387-407 (AFMG…SGDL).

It belongs to the universal ribosomal protein uL3 family. In terms of assembly, component of the large ribosomal subunit in striated muscle cells.

Heart- and skeletal muscle-specific component of the ribosome, which regulates muscle function. Component of the large ribosomal subunit in striated muscle cells: replaces the RPL3 paralog in the ribosome in these cells. The ribosome is a large ribonucleoprotein complex responsible for the synthesis of proteins in the cell. Inhibits myotube growth and muscle function. This chain is Ribosomal protein uL3-like, found in Homo sapiens (Human).